The sequence spans 327 residues: DNA-directed RNA polymerase subunit alpha (327 aa).

The segment at 1 to 233 (MVREKVKVST…NLFIPFLHVE (233 aa)) is alpha N-terminal domain (alpha-NTD). Residues 265-327 (KELAFQYIFI…KKILDILEKK (63 aa)) are alpha C-terminal domain (alpha-CTD).

It belongs to the RNA polymerase alpha chain family. In plastids the minimal PEP RNA polymerase catalytic core is composed of four subunits: alpha, beta, beta', and beta''. When a (nuclear-encoded) sigma factor is associated with the core the holoenzyme is formed, which can initiate transcription.

The protein resides in the plastid. It localises to the chloroplast. The catalysed reaction is RNA(n) + a ribonucleoside 5'-triphosphate = RNA(n+1) + diphosphate. DNA-dependent RNA polymerase catalyzes the transcription of DNA into RNA using the four ribonucleoside triphosphates as substrates. This is DNA-directed RNA polymerase subunit alpha from Olimarabidopsis pumila (Dwarf rocket).